The following is a 229-amino-acid chain: 2,3-bisphosphoglycerate-dependent phosphoglycerate mutase (229 aa).

Substrate is bound by residues 8-15, 21-22, arginine 60, 87-90, lysine 98, 114-115, and 183-184; these read RHGESAWN, TG, ERHY, RR, and GN. The active-site Tele-phosphohistidine intermediate is the histidine 9. Catalysis depends on glutamate 87, which acts as the Proton donor/acceptor.

Belongs to the phosphoglycerate mutase family. BPG-dependent PGAM subfamily. As to quaternary structure, homodimer.

It carries out the reaction (2R)-2-phosphoglycerate = (2R)-3-phosphoglycerate. The protein operates within carbohydrate degradation; glycolysis; pyruvate from D-glyceraldehyde 3-phosphate: step 3/5. In terms of biological role, catalyzes the interconversion of 2-phosphoglycerate and 3-phosphoglycerate. The sequence is that of 2,3-bisphosphoglycerate-dependent phosphoglycerate mutase from Polynucleobacter asymbioticus (strain DSM 18221 / CIP 109841 / QLW-P1DMWA-1) (Polynucleobacter necessarius subsp. asymbioticus).